The sequence spans 648 residues: Acetyl-coenzyme A synthetase (648 aa).

CoA-binding positions include 190 to 193, Thr308, and Asn332; that span reads RGGK. ATP contacts are provided by residues 384-386, 408-413, Asp497, and Arg512; these read GEP and DTWWQT. Ser520 is a binding site for CoA. Arg523 contacts ATP. Val534, His536, and Val539 together coordinate Mg(2+). Arg581 lines the CoA pocket. Lys606 carries the N6-acetyllysine modification.

Belongs to the ATP-dependent AMP-binding enzyme family. Mg(2+) is required as a cofactor. Post-translationally, acetylated. Deacetylation by the SIR2-homolog deacetylase activates the enzyme.

It catalyses the reaction acetate + ATP + CoA = acetyl-CoA + AMP + diphosphate. Its function is as follows. Catalyzes the conversion of acetate into acetyl-CoA (AcCoA), an essential intermediate at the junction of anabolic and catabolic pathways. AcsA undergoes a two-step reaction. In the first half reaction, AcsA combines acetate with ATP to form acetyl-adenylate (AcAMP) intermediate. In the second half reaction, it can then transfer the acetyl group from AcAMP to the sulfhydryl group of CoA, forming the product AcCoA. This Bradyrhizobium diazoefficiens (strain JCM 10833 / BCRC 13528 / IAM 13628 / NBRC 14792 / USDA 110) protein is Acetyl-coenzyme A synthetase.